The primary structure comprises 172 residues: Ribosome maturation factor RimM (172 aa).

Residues 95 to 168 (AEGEFYYHQI…RVDVEIMEGL (74 aa)) enclose the PRC barrel domain.

This sequence belongs to the RimM family. As to quaternary structure, binds ribosomal protein uS19.

It localises to the cytoplasm. In terms of biological role, an accessory protein needed during the final step in the assembly of 30S ribosomal subunit, possibly for assembly of the head region. Essential for efficient processing of 16S rRNA. May be needed both before and after RbfA during the maturation of 16S rRNA. It has affinity for free ribosomal 30S subunits but not for 70S ribosomes. The polypeptide is Ribosome maturation factor RimM (Streptococcus equi subsp. equi (strain 4047)).